The chain runs to 235 residues: Ubiquinone/menaquinone biosynthesis C-methyltransferase UbiE (235 aa).

S-adenosyl-L-methionine contacts are provided by T60 and D81.

Belongs to the class I-like SAM-binding methyltransferase superfamily. MenG/UbiE family.

It catalyses the reaction a 2-demethylmenaquinol + S-adenosyl-L-methionine = a menaquinol + S-adenosyl-L-homocysteine + H(+). The catalysed reaction is a 2-methoxy-6-(all-trans-polyprenyl)benzene-1,4-diol + S-adenosyl-L-methionine = a 5-methoxy-2-methyl-3-(all-trans-polyprenyl)benzene-1,4-diol + S-adenosyl-L-homocysteine + H(+). The protein operates within quinol/quinone metabolism; menaquinone biosynthesis; menaquinol from 1,4-dihydroxy-2-naphthoate: step 2/2. It functions in the pathway cofactor biosynthesis; ubiquinone biosynthesis. Its function is as follows. Methyltransferase required for the conversion of demethylmenaquinol (DMKH2) to menaquinol (MKH2) and the conversion of 2-polyprenyl-6-methoxy-1,4-benzoquinol (DDMQH2) to 2-polyprenyl-3-methyl-6-methoxy-1,4-benzoquinol (DMQH2). In Geotalea uraniireducens (strain Rf4) (Geobacter uraniireducens), this protein is Ubiquinone/menaquinone biosynthesis C-methyltransferase UbiE.